The primary structure comprises 399 residues: Elongation factor Tu 2 (399 aa).

Positions 10-209 constitute a tr-type G domain; sequence KPHVNIGTIG…QVDGYIPEPE (200 aa). The G1 stretch occupies residues 19 to 26; sequence GHVDHGKT. Residue 19–26 participates in GTP binding; that stretch reads GHVDHGKT. Position 26 (threonine 26) interacts with Mg(2+). The interval 60 to 64 is G2; it reads GITIA. The G3 stretch occupies residues 81–84; that stretch reads DCPG. Residues 81–85 and 136–139 each bind GTP; these read DCPGH and NKAD. The G4 stretch occupies residues 136-139; sequence NKAD. A G5 region spans residues 174–176; sequence SAL.

It belongs to the TRAFAC class translation factor GTPase superfamily. Classic translation factor GTPase family. EF-Tu/EF-1A subfamily. As to quaternary structure, monomer.

It localises to the cytoplasm. It catalyses the reaction GTP + H2O = GDP + phosphate + H(+). Functionally, GTP hydrolase that promotes the GTP-dependent binding of aminoacyl-tRNA to the A-site of ribosomes during protein biosynthesis. The protein is Elongation factor Tu 2 of Syntrophotalea carbinolica (strain DSM 2380 / NBRC 103641 / GraBd1) (Pelobacter carbinolicus).